The following is a 197-amino-acid chain: Phosphoheptose isomerase (197 aa).

One can recognise an SIS domain in the interval 36 to 197 (MVNALLNEGK…IDSQLFGSEE (162 aa)). 51–53 (NGG) contacts substrate. Zn(2+) contacts are provided by H60 and E64. Residues E64, 93 to 94 (ND), 119 to 121 (STS), S124, and Q174 contribute to the substrate site. Positions 174 and 182 each coordinate Zn(2+).

This sequence belongs to the SIS family. GmhA subfamily. Homotetramer. Zn(2+) is required as a cofactor.

The protein resides in the cytoplasm. The catalysed reaction is 2 D-sedoheptulose 7-phosphate = D-glycero-alpha-D-manno-heptose 7-phosphate + D-glycero-beta-D-manno-heptose 7-phosphate. It participates in carbohydrate biosynthesis; D-glycero-D-manno-heptose 7-phosphate biosynthesis; D-glycero-alpha-D-manno-heptose 7-phosphate and D-glycero-beta-D-manno-heptose 7-phosphate from sedoheptulose 7-phosphate: step 1/1. Its function is as follows. Catalyzes the isomerization of sedoheptulose 7-phosphate in D-glycero-D-manno-heptose 7-phosphate. This Pseudomonas fluorescens (strain Pf0-1) protein is Phosphoheptose isomerase.